A 152-amino-acid polypeptide reads, in one-letter code: Transcriptional repressor NrdR (152 aa).

Residues 3-34 (CPKCGSLNDKVVDTRQSKDGTVIRRRRECLDC) fold into a zinc finger. The region spanning 49–139 (IVVKKKNGTT…VYNEFQDIKD (91 aa)) is the ATP-cone domain.

Belongs to the NrdR family. Zn(2+) is required as a cofactor.

Its function is as follows. Negatively regulates transcription of bacterial ribonucleotide reductase nrd genes and operons by binding to NrdR-boxes. In Persephonella marina (strain DSM 14350 / EX-H1), this protein is Transcriptional repressor NrdR.